Here is a 226-residue protein sequence, read N- to C-terminus: ATP synthase subunit a (226 aa).

6 consecutive transmembrane segments (helical) span residues 18-38, 76-96, 105-125, 134-154, 179-199, and 201-221; these read FITG…SLGA, YFPL…IGII, SWSF…FEGI, FAHF…IEII, LIML…VLFF, and GILQ…GAVL.

The protein belongs to the ATPase A chain family. As to quaternary structure, F-type ATPases have 2 components, CF(1) - the catalytic core - and CF(0) - the membrane proton channel. CF(1) has five subunits: alpha(3), beta(3), gamma(1), delta(1), epsilon(1). CF(0) has three main subunits: a(1), b(2) and c(9-12). The alpha and beta chains form an alternating ring which encloses part of the gamma chain. CF(1) is attached to CF(0) by a central stalk formed by the gamma and epsilon chains, while a peripheral stalk is formed by the delta and b chains.

The protein resides in the cell inner membrane. In terms of biological role, key component of the proton channel; it plays a direct role in the translocation of protons across the membrane. This is ATP synthase subunit a from Helicobacter acinonychis (strain Sheeba).